The primary structure comprises 605 residues: DNA mismatch repair protein MutL (605 aa).

The protein belongs to the DNA mismatch repair MutL/HexB family.

This protein is involved in the repair of mismatches in DNA. It is required for dam-dependent methyl-directed DNA mismatch repair. May act as a 'molecular matchmaker', a protein that promotes the formation of a stable complex between two or more DNA-binding proteins in an ATP-dependent manner without itself being part of a final effector complex. The polypeptide is DNA mismatch repair protein MutL (Rhizobium meliloti (strain 1021) (Ensifer meliloti)).